We begin with the raw amino-acid sequence, 740 residues long: Elongation factor 2 (740 aa).

The region spanning 23–264 (AQIRNAGTLA…MIIEHIPPPN (242 aa)) is the tr-type G domain. GTP is bound by residues 32-39 (AHVDHGKT), 98-102 (DTPGH), and 152-155 (NKID). His-605 is modified (diphthamide).

This sequence belongs to the TRAFAC class translation factor GTPase superfamily. Classic translation factor GTPase family. EF-G/EF-2 subfamily.

It localises to the cytoplasm. In terms of biological role, catalyzes the GTP-dependent ribosomal translocation step during translation elongation. During this step, the ribosome changes from the pre-translocational (PRE) to the post-translocational (POST) state as the newly formed A-site-bound peptidyl-tRNA and P-site-bound deacylated tRNA move to the P and E sites, respectively. Catalyzes the coordinated movement of the two tRNA molecules, the mRNA and conformational changes in the ribosome. This is Elongation factor 2 from Pyrobaculum aerophilum (strain ATCC 51768 / DSM 7523 / JCM 9630 / CIP 104966 / NBRC 100827 / IM2).